The chain runs to 228 residues: Sec-independent protein translocase protein TatB (228 aa).

The chain crosses the membrane as a helical span at residues 1–21 (MFDFGLGELVFVGIIALIVLG). Disordered stretches follow at residues 109 to 162 (DFGV…AETD) and 197 to 228 (PHTT…VRKS). Residues 206 to 228 (AISRKRDFRPKHRAKPKLRVRKS) are compositionally biased toward basic residues.

The protein belongs to the TatB family. In terms of assembly, the Tat system comprises two distinct complexes: a TatABC complex, containing multiple copies of TatA, TatB and TatC subunits, and a separate TatA complex, containing only TatA subunits. Substrates initially bind to the TatABC complex, which probably triggers association of the separate TatA complex to form the active translocon.

It is found in the cell inner membrane. Functionally, part of the twin-arginine translocation (Tat) system that transports large folded proteins containing a characteristic twin-arginine motif in their signal peptide across membranes. Together with TatC, TatB is part of a receptor directly interacting with Tat signal peptides. TatB may form an oligomeric binding site that transiently accommodates folded Tat precursor proteins before their translocation. This is Sec-independent protein translocase protein TatB from Neisseria meningitidis serogroup B (strain ATCC BAA-335 / MC58).